A 531-amino-acid polypeptide reads, in one-letter code: Protein SHORT-ROOT (531 aa).

Residues 14–39 (QQSDSIITNQSSLSRTSTTTTGSPQT) are compositionally biased toward low complexity. Disordered regions lie at residues 14–40 (QQSDSIITNQSSLSRTSTTTTGSPQTA) and 65–103 (SSSSSHHNHHNHNNPNTYYSPFTTPTQYHPATSSTPSST). Positions 81-93 (TYYSPFTTPTQYH) are enriched in polar residues. The span at 94-103 (PATSSTPSST) shows a compositional bias: low complexity. Residues 134 to 529 (FDFSANAKWA…QPVVWASAWR (396 aa)) enclose the GRAS domain. The tract at residues 141 to 206 (KWADSVLLEA…GSGERCYRTM (66 aa)) is leucine repeat I (LRI). Residues 225 to 290 (VLKFQEVSPW…DDTPHLRLTT (66 aa)) are VHIID. The short motif at 256–260 (IHIVD) is the VHIID element. Residues 310–343 (EIGNRMEKFARLMGVPFKFNIIHHVGDLSEFDLN) are leucine repeat II (LRII). Positions 353-449 (LAINCVGAMH…ERAAGRAIVD (97 aa)) are PFYRE. The tract at residues 452–529 (ACEPSDSTER…QPVVWASAWR (78 aa)) is SAW.

This sequence belongs to the GRAS family. Interacts with SCR, SCL23, JKD and MGP. Interacts with SIEL. Association to endosomes and intercellular movement of SHR rely on the interaction with SIEL. In terms of tissue distribution, expressed in the stele and the quiescent center. Not detected in the ground tissue cell lineage. The SHR protein moves from the stele to a single layer of adjacent cells, where it enters the nucleus.

It is found in the cytoplasm. Its subcellular location is the nucleus. It localises to the early endosome. The protein resides in the late endosome. The protein localises to the recycling endosome. Its function is as follows. Transcription factor required for quiescent center cells specification and maintenance of surrounding stem cells, and for the asymmetric cell division involved in radial pattern formation in roots. Essential for both cell division and cell specification. Regulates the radial organization of the shoot axial organs and is required for normal shoot gravitropism. Directly controls the transcription of SCR, and when associated with SCR, of MGP, RLK, TRI, NUC and SCL3. This Arabidopsis thaliana (Mouse-ear cress) protein is Protein SHORT-ROOT.